Here is a 357-residue protein sequence, read N- to C-terminus: tRNA pseudouridine synthase D (357 aa).

Aspartate 76 serves as the catalytic Nucleophile. The TRUD domain maps to 151 to 331; it reads GMPNYFGYQR…DGRYKDEEAQ (181 aa).

Belongs to the pseudouridine synthase TruD family.

It catalyses the reaction uridine(13) in tRNA = pseudouridine(13) in tRNA. In terms of biological role, responsible for synthesis of pseudouridine from uracil-13 in transfer RNAs. The chain is tRNA pseudouridine synthase D from Sulfurimonas denitrificans (strain ATCC 33889 / DSM 1251) (Thiomicrospira denitrificans (strain ATCC 33889 / DSM 1251)).